The sequence spans 402 residues: Peptidyl-prolyl cis-trans isomerase FKBP8 (402 aa).

Residues 28-39 (DGVDDAEEEDDL) are compositionally biased toward acidic residues. Residues 28-54 (DGVDDAEEEDDLSGLPPLEDMGQPTVE) are disordered. The PPIase FKBP-type domain maps to 110 to 194 (GQVVTVHLQM…CLEVTLKTAE (85 aa)). The TPR 1 repeat unit spans residues 211–244 (ANRKRECGNAHYQRADFVLAANSYDLAIKAITSN). Residues Lys-239, Lys-261, Lys-263, and Lys-274 each participate in a glycyl lysine isopeptide (Lys-Gly) (interchain with G-Cter in ubiquitin) cross-link. TPR repeat units lie at residues 262-295 (VKCL…QPDN) and 296-329 (IKAL…EPSN). The residue at position 286 (Ser-286) is a Phosphoserine. Residues Lys-297, Lys-304, Lys-324, Lys-330, Lys-338, Lys-341, and Lys-342 each participate in a glycyl lysine isopeptide (Lys-Gly) (interchain with G-Cter in ubiquitin) cross-link. The chain crosses the membrane as a helical span at residues 380-400 (WLFGATAVALGGVALSVVIAA).

In terms of assembly, homomultimers or heteromultimers (Potential). Forms heterodimer with calmodulin. When activated by calmodulin and calcium, interacts with the BH4 domain of BCL2 and weakly with BCLX isoform Bcl-X(L). Does not bind and inhibit calcineurin. Interacts with ZFYVE27; may negatively regulate ZFYVE27 phosphorylation. Ca(2+) is required as a cofactor. Post-translationally, ubiquitinated by PRKN during mitophagy, leading to its degradation and enhancement of mitophagy. Deubiquitinated by USP30. In terms of tissue distribution, detected throughout the embryonic body, in caudal neural tube, limbs and head. Detected in adult retina, brain, heart, kidney, liver, pancreas, lung, testis and urinary bladder (at protein level). Detected in adult brain, kidney, liver, testis and trigeminal nerve, and in embryo. Detected at lower levels in lung, spleen, heart and ovary. Widely expressed in forebrain. Detected in the Purkinje cell layer in the cerebellum and in hippocampus neurons.

The protein resides in the mitochondrion membrane. The enzyme catalyses [protein]-peptidylproline (omega=180) = [protein]-peptidylproline (omega=0). Constitutively inactive PPiase, which becomes active when bound to calmodulin and calcium. Seems to act as a chaperone for BCL2, targets it to the mitochondria and modulates its phosphorylation state. The BCL2/FKBP8/calmodulin/calcium complex probably interferes with the binding of BCL2 to its targets. The active form of FKBP8 may therefore play a role in the regulation of apoptosis. Required for normal embryonic development. In Mus musculus (Mouse), this protein is Peptidyl-prolyl cis-trans isomerase FKBP8 (Fkbp8).